The following is a 449-amino-acid chain: Trigger factor (449 aa).

A PPIase FKBP-type domain is found at 162–247 (GDTVTIDYTG…IHEVKSKELP (86 aa)). Basic residues predominate over residues 427–438 (AKKATKKSTAKK). The tract at residues 427–449 (AKKATKKSTAKKSTKEDEKKADK) is disordered. Residues 439–449 (STKEDEKKADK) are compositionally biased toward basic and acidic residues.

Belongs to the FKBP-type PPIase family. Tig subfamily.

It is found in the cytoplasm. The enzyme catalyses [protein]-peptidylproline (omega=180) = [protein]-peptidylproline (omega=0). Functionally, involved in protein export. Acts as a chaperone by maintaining the newly synthesized protein in an open conformation. Functions as a peptidyl-prolyl cis-trans isomerase. This Lactobacillus gasseri (strain ATCC 33323 / DSM 20243 / BCRC 14619 / CIP 102991 / JCM 1131 / KCTC 3163 / NCIMB 11718 / NCTC 13722 / AM63) protein is Trigger factor.